The primary structure comprises 297 residues: Formylmethanofuran--tetrahydromethanopterin formyltransferase (297 aa).

The protein belongs to the FTR family. As to quaternary structure, homotetramer.

It localises to the cytoplasm. The enzyme catalyses N-formylmethanofuran + 5,6,7,8-tetrahydromethanopterin + H(+) = N(5)-formyl-5,6,7,8-tetrahydromethanopterin + methanofuran. Its pathway is metabolic intermediate metabolism; lactate oxidation. Catalyzes the transfer of a formyl group from 5-formyl tetrahydromethanopterin (5-formyl-H(4)MPT) to methanofuran (MFR) to produce formylmethanofuran (formyl-MFR) and tetrahydromethanopterin (H(4)MPT). This chain is Formylmethanofuran--tetrahydromethanopterin formyltransferase, found in Archaeoglobus fulgidus (strain ATCC 49558 / DSM 4304 / JCM 9628 / NBRC 100126 / VC-16).